The chain runs to 285 residues: Bifunctional protein FolD 2 (285 aa).

NADP(+) is bound by residues 164-166, S189, and V230; that span reads GRS.

It belongs to the tetrahydrofolate dehydrogenase/cyclohydrolase family. In terms of assembly, homodimer.

It carries out the reaction (6R)-5,10-methylene-5,6,7,8-tetrahydrofolate + NADP(+) = (6R)-5,10-methenyltetrahydrofolate + NADPH. The enzyme catalyses (6R)-5,10-methenyltetrahydrofolate + H2O = (6R)-10-formyltetrahydrofolate + H(+). It functions in the pathway one-carbon metabolism; tetrahydrofolate interconversion. Functionally, catalyzes the oxidation of 5,10-methylenetetrahydrofolate to 5,10-methenyltetrahydrofolate and then the hydrolysis of 5,10-methenyltetrahydrofolate to 10-formyltetrahydrofolate. The sequence is that of Bifunctional protein FolD 2 from Geobacter sulfurreducens (strain ATCC 51573 / DSM 12127 / PCA).